Reading from the N-terminus, the 357-residue chain is Adenylate isopentenyltransferase 1, chloroplastic (357 aa).

Residues 1–71 constitute a chloroplast transit peptide; the sequence is MTELNFHLLP…NRKDKVVVIL (71 aa). Residues 20-39 show a composition bias toward low complexity; sequence TTTSPSFSSHSSSSSSLLSF. Residues 20-58 form a disordered region; it reads TTTSPSFSSHSSSSSSLLSFTKRRRKHQPLVSSIRMEQS. 72–79 provides a ligand contact to ATP; the sequence is GATGAGKS.

Belongs to the IPP transferase family. In terms of tissue distribution, expressed in the vascular stele of the roots, in the xylem precursor cell files in the root tip, in leaf axils, ovules, and immature seeds.

It localises to the plastid. The protein resides in the chloroplast. The enzyme catalyses dimethylallyl diphosphate + AMP = N(6)-(dimethylallyl)adenosine 5'-phosphate + diphosphate. The catalysed reaction is dimethylallyl diphosphate + ADP = N(6)-(dimethylallyl)adenosine 5'-diphosphate + diphosphate. It carries out the reaction dimethylallyl diphosphate + ATP = N(6)-(dimethylallyl)adenosine 5'-triphosphate + diphosphate. Its function is as follows. Involved in cytokinin biosynthesis. Catalyzes the transfer of an isopentenyl group from dimethylallyl diphosphate (DMAPP) to ATP, ADP and AMP. Adenine, adenosine, isopentenylpyrophosphate and 1-hydroxy-2-methyl-2-(E)-butenyl 4-diphosphate (HMBDP) are not used as substrates. In Arabidopsis thaliana (Mouse-ear cress), this protein is Adenylate isopentenyltransferase 1, chloroplastic (IPT1).